Reading from the N-terminus, the 1573-residue chain is MAFSKGFRIYHKLDPPPFSLIVETRHKEECLMFESGAVAVLSSAEKEAIKGTYSKVLDAYGLLGVLRLNLGDTMLHYLVLVTGCMSVGKIQESEVFRVTSTEFISLRIDSSDEDRISEVRKVLNSGNFYFAWSASGISLDLSLNAHRSMQEQTTDNRFFWNQSLHLHLKHYGVNCDDWLLRLMCGGVEIRTIYAAHKQAKACLISRLSCERAGTRFNVRGTNDDGHVANFVETEQVVYLDDSVSSFIQIRGSVPLFWEQPGLQVGSHRVRMSRGFEANAPAFDRHFRTLKNLYGKQIIVNLLGSKEGEHMLSKAFQSHLKASEHAADIQMVNFDYHQMVKGGKAEKLHSVLKPQVQKFLDYGFFYFNGSEVQRCQSGTVRTNCLDCLDRTNSVQAFLGLEMLAKQLEALGLAEKPQLVTRFQEVFRSMWSVNGDSISKIYAGTGALEGKAKLKDGARSVTRTIQNNFFDSSKQEAIDVLLLGNTLNSDLADKARALLTTGSLRVSEQTLQSASSKVLKSMCENFYKYSKPKKIRVCVGTWNVNGGKQFRSIAFKNQTLTDWLLDAPKLAGIQEFQDKRSKPTDIFAIGFEEMVELNAGNIVSASTTNQKLWAVELQKTISRDNKYVLLASEQLVGVCLFVFIRPQHAPFIRDVAVDTVKTGMGGATGNKGAVAIRMLFHTTSLCFVCSHFAAGQSQVKERNEDFIEIARKLSFPMGRMLFSHDYVFWCGDFNYRIDLPNEEVKELIRQQNWDSLIAGDQLINQKNAGQVFRGFLEGKVTFAPTYKYDLFSDDYDTSEKCRTPAWTDRVLWRRRKWPFDRSAEDLDLLNASFQDESKILYTWTPGTLLHYGRAELKTSDHRPVVALIDIDIFEVEAEERQNIYKEVIAVQGPPDGTVLVSIKSSLPENNFFDDALIDELLQQFASFGEVILIRFVEDKMWVTFLEGSSALNVLSLNGKELLNRTITIALKSPDWIKNLEEEMSLEKISIALPSSTSSTLLGEDAEVAADFDMEGDVDDYSAEVEELLPQHLQPSSSSGLGTSPSSSPRTSPCQSPTISEGPVPSLPIRPSRAPSRTPGPPSAQSSPIDAQPATPLPQKDPAQPLEPKRPPPPRPVAPPTRPAPPQRPPPPSGARSPAPTRKEFGGIGAPPSPGVARREMEAPKSPGTTRKDNIGRSQPSPQAGLAGPGPAGYSTARPTIPPRAGVISAPQSHARASAGRLTPESQSKTSETSKGSTFLPEPLKPQAAFPPQSSLPPPAQRLQEPLVPVAAPMPQSGPQPNLETPPQPPPRSRSSHSLPSEASSQPQVKTNGISDGKRESPLKIDPFEDLSFNLLAVSKAQLSVQTSPVPTPDPKRLIQLPSATQSNVLSSVSCMPTMPPIPARSQSQENMRSSPNPFITGLTRTNPFSDRTAAPGNPFRAKSEESEATSWFSKEEPVTISPFPSLQPLGHNKSRASSSLDGFKDSFDLQGQSTLKISNPKGWVTFEEEEDFGVKGKSKSACSDLLGNQPSSFSGSNLTLNDDWNKGTNVSFCVLPSRRPPPPPVPLLPPGTSPPVDPFTTLASKASPTLDFTER.

The 324-residue stretch at 119–442 (VRKVLNSGNF…GDSISKIYAG (324 aa)) folds into the SAC domain. Residues 500–899 (GSLRVSEQTL…GPPDGTVLVS (400 aa)) form a catalytic region. 2 positions are modified to phosphoserine: S820 and S830. Residues 902 to 971 (SSLPENNFFD…RTITIALKSP (70 aa)) form the RRM domain. The segment covering 1029–1054 (HLQPSSSSGLGTSPSSSPRTSPCQSP) has biased composition (low complexity). Disordered regions lie at residues 1029 to 1322 (HLQP…PLKI), 1341 to 1360 (SVQT…QLPS), 1370 to 1463 (VSCM…GFKD), and 1535 to 1573 (SRRP…FTER). S1053 carries the post-translational modification Phosphoserine. Residues 1108 to 1130 (PPPPRPVAPPTRPAPPQRPPPPS) are compositionally biased toward pro residues. A phosphoserine mark is found at S1150 and S1178. At R1201 the chain carries Omega-N-methylarginine. T1220 is modified (phosphothreonine). Residues 1221–1234 (PESQSKTSETSKGS) show a composition bias toward polar residues. A Phosphoserine modification is found at S1292. Positions 1293–1304 (SHSLPSEASSQP) are enriched in low complexity. Residues 1313-1322 (DGKRESPLKI) are compositionally biased toward basic and acidic residues. Phosphoserine occurs at positions 1318 and 1345. Residue T1349 is modified to Phosphothreonine. The segment covering 1382 to 1407 (RSQSQENMRSSPNPFITGLTRTNPFS) has biased composition (polar residues). 3 repeat units span residues 1396–1398 (FIT), 1406–1408 (FSD), and 1417–1419 (FRA). The tract at residues 1396 to 1419 (FITGLTRTNPFSDRTAAPGNPFRA) is 3 X 3 AA repeats of N-P-F. The span at 1536 to 1555 (RRPPPPPVPLLPPGTSPPVD) shows a compositional bias: pro residues. A phosphoserine mark is found at S1551 and S1565.

Belongs to the synaptojanin family. The protein in the central section; belongs to the inositol 1,4,5-trisphosphate 5-phosphatase family. As to quaternary structure, interacts with ASH/GRB2. Interacts with PACSIN1, PACSIN2 and PACSIN3. Interacts with AMPH, SH3GL1, SH3GL2 and SH3GL3. Interacts with MYO1E (via SH3 domain). Interacts with BIN1 and DNM1. Interacts with EPS15.

Its subcellular location is the cytoplasm. The protein localises to the perinuclear region. The enzyme catalyses a 1,2-diacyl-sn-glycero-3-phospho-(1D-myo-inositol-4,5-bisphosphate) + H2O = a 1,2-diacyl-sn-glycero-3-phospho-(1D-myo-inositol 4-phosphate) + phosphate. Phosphatase that acts on various phosphoinositides, including phosphatidylinositol 4-phosphate, phosphatidylinositol (4,5)-bisphosphate and phosphatidylinositol (3,4,5)-trisphosphate. Has a role in clathrin-mediated endocytosis. Hydrolyzes PIP2 bound to actin regulatory proteins resulting in the rearrangement of actin filaments downstream of tyrosine kinase and ASH/GRB2. This Homo sapiens (Human) protein is Synaptojanin-1 (SYNJ1).